Reading from the N-terminus, the 273-residue chain is Zinc finger protein 80 (273 aa).

C2H2-type zinc fingers lie at residues 49 to 71 (YKCK…HQIH) and 77 to 99 (YECQ…MRIH). Residues 105-127 (CKCVECGKVFNRRSHLLCYRQIH) form a C2H2-type 3; atypical zinc finger. 4 C2H2-type zinc fingers span residues 133-155 (YECS…RMTH), 161-183 (FGCK…MKIH), 189-211 (YKCG…SMTH), and 217-239 (YECK…TRSH).

This sequence belongs to the krueppel C2H2-type zinc-finger protein family.

It localises to the nucleus. In terms of biological role, may be involved in transcriptional regulation. The sequence is that of Zinc finger protein 80 (ZNF80) from Gorilla gorilla gorilla (Western lowland gorilla).